Consider the following 181-residue polypeptide: Nucleoside triphosphate/diphosphate phosphatase (181 aa).

Residue arginine 26 is the Proton donor of the active site. Asparagine 90, aspartate 106, aspartate 108, aspartate 110, aspartate 123, and glutamate 126 together coordinate Mg(2+).

The protein belongs to the Ntdp family. Mg(2+) is required as a cofactor.

It catalyses the reaction a ribonucleoside 5'-triphosphate + H2O = a ribonucleoside 5'-diphosphate + phosphate + H(+). The enzyme catalyses a ribonucleoside 5'-diphosphate + H2O = a ribonucleoside 5'-phosphate + phosphate + H(+). In terms of biological role, has nucleoside phosphatase activity towards nucleoside triphosphates and nucleoside diphosphates. The protein is Nucleoside triphosphate/diphosphate phosphatase of Ligilactobacillus salivarius (strain UCC118) (Lactobacillus salivarius).